The sequence spans 635 residues: DNA-directed RNA polymerase III subunit rpc3 (635 aa).

Disordered stretches follow at residues Pro-131 to Gln-164, Val-246 to Thr-295, and Ser-386 to Gly-424. Residues Ser-272–Gly-292 show a composition bias toward acidic residues. Basic and acidic residues predominate over residues Asp-398–Glu-407. A compositionally biased stretch (polar residues) spans Asn-411 to Gly-424. Residues Thr-562 to Phe-583 form a leucine-zipper region.

It belongs to the RNA polymerase beta chain family. As to quaternary structure, component of the RNA polymerase III (Pol III) complex consisting of 17 subunits.

The protein localises to the nucleus. In terms of biological role, DNA-dependent RNA polymerase catalyzes the transcription of DNA into RNA using the four ribonucleoside triphosphates as substrates. Specific core component of RNA polymerase III which synthesizes small RNAs, such as 5S rRNA and tRNAs. The sequence is that of DNA-directed RNA polymerase III subunit rpc3 (rpc82) from Aspergillus clavatus (strain ATCC 1007 / CBS 513.65 / DSM 816 / NCTC 3887 / NRRL 1 / QM 1276 / 107).